The sequence spans 172 residues: Stellate protein CG33247 (172 aa).

It belongs to the casein kinase 2 subunit beta family. In terms of assembly, interacts in vitro with the casein kinase 2 alpha subunit (CkII-alpha). The relevance of such interaction is however unclear in vivo. In terms of tissue distribution, probably not expressed in wild-type flies. In males lacking the Y chromosome, it is testis-specific and constitutes the main component of star-shaped crystals.

Functionally, unknown. In males lacking the Y chromosome, its strong overexpression leads to the appearance of proteinaceous star-shaped crystals in the primary spermatocytes causing meiotic drive, possibly by interfering with normal casein kinase 2 activity. In Drosophila melanogaster (Fruit fly), this protein is Stellate protein CG33247 (Ste:CG33247).